Reading from the N-terminus, the 231-residue chain is Transmembrane gamma-carboxyglutamic acid protein 3 (231 aa).

Positions 1-19 are excised as a propeptide; that stretch reads MAVFLEAKDAHSVLKRFPR. The Gla domain maps to 20–65; that stretch reads ANEFLEELRQGTIERECMEEICSYEEVKEVFENKEKTMEFWKGYPN. At 20 to 78 the chain is on the extracellular side; that stretch reads ANEFLEELRQGTIERECMEEICSYEEVKEVFENKEKTMEFWKGYPNAVYSVRDPSQSSD. 4-carboxyglutamate is present on residues Glu22, Glu25, Glu26, Glu33, Glu35, Glu38, Glu39, Glu44, Glu45, Glu48, Glu51, Glu54, and Glu58. Residues Cys36 and Cys41 are joined by a disulfide bond. The helical transmembrane segment at 79-101 threads the bilayer; that stretch reads AMYVVVPLLGVALLIVIALFIIW. The Cytoplasmic portion of the chain corresponds to 102 to 231; that stretch reads RCQLQKATRH…IVAANPGADK (130 aa). 2 disordered regions span residues 140–165 and 182–231; these read HSQG…SRGG and LSRL…GADK. A compositionally biased stretch (low complexity) spans 202-213; it reads ESSSEEASVSYS.

In terms of processing, gla residues are produced after subsequent post-translational modifications of glutamate by a vitamin K-dependent gamma-carboxylase. In terms of tissue distribution, expressed in brain, lung, kidney and heart.

Its subcellular location is the membrane. The sequence is that of Transmembrane gamma-carboxyglutamic acid protein 3 (PRRG3) from Homo sapiens (Human).